The primary structure comprises 140 residues: Regulator of ribonuclease activity B (140 aa).

The disordered stretch occupies residues 115 to 140; that stretch reads FEDPNAQDDDEDDGEAIDEDDNGIRH. Residues 119–140 show a composition bias toward acidic residues; sequence NAQDDDEDDGEAIDEDDNGIRH.

It belongs to the RraB family. In terms of assembly, interacts with the C-terminal region of Rne.

It localises to the cytoplasm. Globally modulates RNA abundance by binding to RNase E (Rne) and regulating its endonucleolytic activity. Can modulate Rne action in a substrate-dependent manner by altering the composition of the degradosome. The sequence is that of Regulator of ribonuclease activity B from Pantoea ananatis (strain LMG 20103).